The following is a 596-amino-acid chain: MSDAQDSRVGSMFGPYHLKRLLGRGGMGEVYEAEHTVKEWTVAVKLMTAEFSKDPVFRERMKREARIAGRLQEPHVVPIHDYGEVDGQMFLEMRLVEGTDLDSVLKRFGPLTPPRAVAIITQIASALDAAHADGVMHRDVKPQNILITRDDFAYLVDFGIASATTDEKLTQLGTAVGTWKYMAPERFSNDEVTYRADIYALACVLHECLTGAPPYRADSAGTLVSSHLMGPIPQPSAIRPGIPKAFDAVVARGMAKKPEDRYASAGDLALAAHEALSDPDQDHAADILRRSQESTLPGTAAVTAQPPTMPTVTPPPIQAAPTGQPSWAPNSGPMPASGPTPTPQYYQGGGWGAPPSGGPSPWAQTPRKTNPWPLVAGAAAVVLVLVLGAIGIWIANRPKPVQPPQPVAEERLSALLLNSSEVNAVMGSSSMQPGKPITSMDSSPVTVSLPDCQGALYTSQDPVYAGTGYTAINGLISSEPGDNYEHWVNQAVVAFPTADKARAFVQTSADKWKNCAGKTVTVTNKAKTYRWTFADVKGSPPTITVIDTQEGAEGWECQRAMSVANNVVVDVNACGYQITNQAGQIAAKIVDKVNKE.

Residues 1–373 (MSDAQDSRVG…QTPRKTNPWP (373 aa)) are Cytoplasmic-facing. The 261-residue stretch at 16 to 276 (YHLKRLLGRG…DLALAAHEAL (261 aa)) folds into the Protein kinase domain. ATP is bound by residues 22–30 (LGRGGMGEV) and lysine 45. The Proton acceptor role is filled by aspartate 139. Threonine 170 is subject to Phosphothreonine. The disordered stretch occupies residues 292–368 (QESTLPGTAA…PSPWAQTPRK (77 aa)). Residues 307–318 (PTMPTVTPPPIQ) are compositionally biased toward pro residues. The helical transmembrane segment at 374 to 394 (LVAGAAAVVLVLVLGAIGIWI) threads the bilayer. Residues 395-596 (ANRPKPVQPP…AKIVDKVNKE (202 aa)) are Extracellular-facing.

It belongs to the protein kinase superfamily. Ser/Thr protein kinase family. Autophosphorylated on threonine and serine residues.

It is found in the cell membrane. It carries out the reaction L-seryl-[protein] + ATP = O-phospho-L-seryl-[protein] + ADP + H(+). The enzyme catalyses L-threonyl-[protein] + ATP = O-phospho-L-threonyl-[protein] + ADP + H(+). In Mycobacterium bovis (strain ATCC BAA-935 / AF2122/97), this protein is Serine/threonine-protein kinase PknH (pknH).